The following is a 102-amino-acid chain: UV-induced protein uvi31 (102 aa).

This sequence belongs to the BolA/IbaG family.

Its subcellular location is the mitochondrion matrix. The protein localises to the cytoplasm. The protein resides in the nucleus. Acts as a mitochondrial iron-sulfur (Fe-S) cluster assembly factor that facilitates [4Fe-4S] cluster insertion into a subset of mitochondrial proteins such as lipoyl synthase (LS) and succinate dehydrogenase (SDH). Required during the last step of iron-sulfur protein assembly when the iron-sulfur cluster is inserted into the target protein. Probably acts together with the monothiol glutaredoxin grx5. Not required for [2Fe-2S] cluster insertion into mitochondrial proteins. May be involved in control of cell division, especially during the resumption from cell cycle arrest. This is UV-induced protein uvi31 from Schizosaccharomyces pombe (strain 972 / ATCC 24843) (Fission yeast).